Reading from the N-terminus, the 358-residue chain is Stearoyl-CoA desaturase 2 (358 aa).

Over 1-71 the chain is Cytoplasmic; the sequence is MPAHILQEIS…EGPPPKLEYV (71 aa). The disordered stretch occupies residues 14 to 43; the sequence is SATTTITAPPSGGQQNGGEKFEKNPHHWGA. The span at 32-43 shows a compositional bias: basic and acidic residues; sequence EKFEKNPHHWGA. A helical membrane pass occupies residues 72-92; the sequence is WRNIVLMALLHIGALYGITLV. Residue N74 coordinates substrate. Residues 93–96 are Lumenal-facing; that stretch reads PSCK. A helical transmembrane segment spans residues 97-117; that stretch reads VYTCLFAYLYYVISALGITAG. The Cytoplasmic portion of the chain corresponds to 118 to 216; sequence AHRLWSHRTY…EKLVMFQRRY (99 aa). 2 residues coordinate Fe cation: H119 and H124. The Histidine box-1 signature appears at 119-124; the sequence is HRLWSH. Substrate is bound by residues N147, R154, and D155. The Fe cation site is built by H156, H159, and H160. The Histidine box-2 signature appears at 156–160; it reads HRAHH. Residues R187 and K188 each contribute to the substrate site. A helical transmembrane segment spans residues 217-236; sequence YKPGLLLMCFILPTLVPWYC. Topologically, residues 237-240 are lumenal; sequence WGET. A helical transmembrane segment spans residues 241–262; the sequence is FVNSLCVSTFLRYAVVLNATWL. W261 is a binding site for substrate. Topologically, residues 263–358 are cytoplasmic; that stretch reads VNSAAHLYGY…RTGEESCKSG (96 aa). Positions 268, 297, 300, and 301 each coordinate Fe cation. Residues 297 to 301 carry the Histidine box-3 motif; sequence HNYHH.

The protein belongs to the fatty acid desaturase type 1 family. The cofactor is Fe(2+). In terms of tissue distribution, detected in brain and adipose tissue, and at much lower levels in testis. Detected in liver when rats are kept on a fat-free diet, but not when their food contains unsaturated fatty acids.

It is found in the endoplasmic reticulum membrane. The protein localises to the microsome membrane. The enzyme catalyses octadecanoyl-CoA + 2 Fe(II)-[cytochrome b5] + O2 + 2 H(+) = (9Z)-octadecenoyl-CoA + 2 Fe(III)-[cytochrome b5] + 2 H2O. The catalysed reaction is hexadecanoyl-CoA + 2 Fe(II)-[cytochrome b5] + O2 + 2 H(+) = (9Z)-hexadecenoyl-CoA + 2 Fe(III)-[cytochrome b5] + 2 H2O. Functionally, stearoyl-CoA desaturase that utilizes O(2) and electrons from reduced cytochrome b5 to introduce the first double bond into saturated fatty acyl-CoA substrates. Catalyzes the insertion of a cis double bond at the delta-9 position into fatty acyl-CoA substrates including palmitoyl-CoA and stearoyl-CoA. Gives rise to a mixture of 16:1 and 18:1 unsaturated fatty acids. Contributes to the biosynthesis of membrane phospholipids, cholesterol esters and triglycerides, especially during embryonic development and in neonates. Important for normal permeability barrier function of the skin in neonates. This is Stearoyl-CoA desaturase 2 (Scd2) from Rattus norvegicus (Rat).